We begin with the raw amino-acid sequence, 469 residues long: MALQTDTQAWRVEIGTRGLMFSNCVPLHLPEGQYHKLRLPVSAYEALAVARYGLVGSLWEVPAVNSALQCLAAAAPCKDVKIYPSCIFQVHAPMFVTIKTSLRCLNPHDLCLCLICVGAAILDIPLLCAPRDGAGARAAEGQAAAAQGGKLRVWGRLSPSSPTSLSLAFPYAGPPPVAWYRHSINLTRSEGVGIGKDCAQDHACPVPPQGHASSAADQAGVPERGRKRAHEGPGAGEAASAGRGDVALSQSRALLWRGLGWDTGRGRLAPGLAMSRDAASGSVHLDIQVDRAEEGWVCDVLLEPGPPTAREGCSLSMDPGLVTLKDAWTLFPLHPEHDAVVPPKEEIHVMAQGHLQGGTPSLWGFTFQEAACDQWVLRPRVWTAHSPIKMTVYNCGHKPLHIGPSTRLGLALFWPAERSDNLDAGRIFYQLTSGELYWGRTVARPPTLTLPVDELRPWPKLTPEEPMQH.

A disordered region spans residues 203-244; it reads ACPVPPQGHASSAADQAGVPERGRKRAHEGPGAGEAASAGRG.

Belongs to the epstein-barr virus LF1 family.

This is an uncharacterized protein from Homo sapiens (Human).